The primary structure comprises 370 residues: GTPase Obg (370 aa).

Positions 1-159 constitute an Obg domain; it reads MKFIDEARIE…RMVRLELKVL (159 aa). The interval 127–147 is disordered; that stretch reads NLHFKSSTNRAPRQKTDGKPG. The region spanning 160–334 is the OBG-type G domain; sequence ADVGLLGMPN…LCYAVYDYLA (175 aa). GTP-binding positions include 166–173, 191–195, 213–216, 284–287, and 315–317; these read GMPNAGKS, FTTLA, DIPG, NKLD, and SAL. S173 and T193 together coordinate Mg(2+).

This sequence belongs to the TRAFAC class OBG-HflX-like GTPase superfamily. OBG GTPase family. As to quaternary structure, monomer. It depends on Mg(2+) as a cofactor.

It is found in the cytoplasm. Functionally, an essential GTPase which binds GTP, GDP and possibly (p)ppGpp with moderate affinity, with high nucleotide exchange rates and a fairly low GTP hydrolysis rate. Plays a role in control of the cell cycle, stress response, ribosome biogenesis and in those bacteria that undergo differentiation, in morphogenesis control. The chain is GTPase Obg from Paraburkholderia phymatum (strain DSM 17167 / CIP 108236 / LMG 21445 / STM815) (Burkholderia phymatum).